A 394-amino-acid polypeptide reads, in one-letter code: Elongation factor Tu (394 aa).

Residues 10–204 form the tr-type G domain; it reads KPHVNVGTIG…HLDSYIPEPE (195 aa). Residues 19–26 are G1; the sequence is GHVDHGKT. 19–26 is a GTP binding site; it reads GHVDHGKT. Residue Thr26 participates in Mg(2+) binding. A G2 region spans residues 60 to 64; the sequence is GITIN. Positions 81–84 are G3; the sequence is DCPG. GTP is bound by residues 81-85 and 136-139; these read DCPGH and NKCD. The G4 stretch occupies residues 136 to 139; sequence NKCD. Positions 174-176 are G5; the sequence is SAL.

It belongs to the TRAFAC class translation factor GTPase superfamily. Classic translation factor GTPase family. EF-Tu/EF-1A subfamily. As to quaternary structure, monomer.

The protein localises to the cytoplasm. The catalysed reaction is GTP + H2O = GDP + phosphate + H(+). Functionally, GTP hydrolase that promotes the GTP-dependent binding of aminoacyl-tRNA to the A-site of ribosomes during protein biosynthesis. The chain is Elongation factor Tu from Cronobacter sakazakii (strain ATCC BAA-894) (Enterobacter sakazakii).